An 887-amino-acid polypeptide reads, in one-letter code: Degenerin-like protein unc-105 (887 aa).

The tract at residues 1 to 33 is disordered; sequence MAEDRIKSKLRRPASIESTMSSRTKPRHKPSPM. Over 1-93 the chain is Cytoplasmic; that stretch reads MAEDRIKSKL…AATADGKWRW (93 aa). The helical transmembrane segment at 94 to 114 threads the bilayer; it reads FWYTAFTICLLALLIQIFFLI. Topologically, residues 115 to 698 are extracellular; it reads SKYRQYGKTV…SVLADLGGLT (584 aa). N-linked (GlcNAc...) asparagine glycosylation is found at asparagine 244, asparagine 450, asparagine 473, asparagine 581, and asparagine 599. Residues 699-719 traverse the membrane as a helical segment; that stretch reads GLWIGASVVSLLEIVTLIVFA. The Cytoplasmic portion of the chain corresponds to 720-887; the sequence is TQAYVRKRKG…YSAPYEHRKK (168 aa). Disordered stretches follow at residues 794-815 and 859-887; these read AIQE…NGSC and SNSE…HRKK.

Belongs to the amiloride-sensitive sodium channel (TC 1.A.6) family. Expressed in body wall muscle.

It is found in the membrane. Ion channel which is permeable to small monovalent cations. Shown not to be H+-ion gated. May be mechanosensitive and is required for growth and muscle development. The protein is Degenerin-like protein unc-105 (unc-105) of Caenorhabditis elegans.